Reading from the N-terminus, the 214-residue chain is LexA repressor (214 aa).

The segment at residues 26 to 46 is a DNA-binding region (H-T-H motif); it reads VREIGEAVGLSSSSTVHSYLK. Catalysis depends on for autocatalytic cleavage activity residues Ser138 and Lys175.

The protein belongs to the peptidase S24 family. Homodimer.

It catalyses the reaction Hydrolysis of Ala-|-Gly bond in repressor LexA.. Functionally, represses a number of genes involved in the response to DNA damage (SOS response), including recA and lexA. In the presence of single-stranded DNA, RecA interacts with LexA causing an autocatalytic cleavage which disrupts the DNA-binding part of LexA, leading to derepression of the SOS regulon and eventually DNA repair. The protein is LexA repressor of Desulforamulus reducens (strain ATCC BAA-1160 / DSM 100696 / MI-1) (Desulfotomaculum reducens).